The sequence spans 573 residues: Dihydroxy-acid dehydratase (573 aa).

Residue cysteine 62 coordinates [2Fe-2S] cluster. Aspartate 94 is a Mg(2+) binding site. [2Fe-2S] cluster is bound at residue cysteine 135. Residues aspartate 136 and lysine 137 each coordinate Mg(2+). An N6-carboxylysine modification is found at lysine 137. [2Fe-2S] cluster is bound at residue cysteine 212. Glutamate 463 is a Mg(2+) binding site. The Proton acceptor role is filled by serine 489.

Belongs to the IlvD/Edd family. Homodimer. [2Fe-2S] cluster is required as a cofactor. Requires Mg(2+) as cofactor.

The catalysed reaction is (2R)-2,3-dihydroxy-3-methylbutanoate = 3-methyl-2-oxobutanoate + H2O. The enzyme catalyses (2R,3R)-2,3-dihydroxy-3-methylpentanoate = (S)-3-methyl-2-oxopentanoate + H2O. It functions in the pathway amino-acid biosynthesis; L-isoleucine biosynthesis; L-isoleucine from 2-oxobutanoate: step 3/4. It participates in amino-acid biosynthesis; L-valine biosynthesis; L-valine from pyruvate: step 3/4. Functions in the biosynthesis of branched-chain amino acids. Catalyzes the dehydration of (2R,3R)-2,3-dihydroxy-3-methylpentanoate (2,3-dihydroxy-3-methylvalerate) into 2-oxo-3-methylpentanoate (2-oxo-3-methylvalerate) and of (2R)-2,3-dihydroxy-3-methylbutanoate (2,3-dihydroxyisovalerate) into 2-oxo-3-methylbutanoate (2-oxoisovalerate), the penultimate precursor to L-isoleucine and L-valine, respectively. This is Dihydroxy-acid dehydratase from Arthrobacter sp. (strain FB24).